A 429-amino-acid chain; its full sequence is Probable M18 family aminopeptidase 2 (429 aa).

His82, His156, and His401 together coordinate Zn(2+).

This sequence belongs to the peptidase M18 family. Requires Zn(2+) as cofactor.

This chain is Probable M18 family aminopeptidase 2, found in Stutzerimonas stutzeri (strain A1501) (Pseudomonas stutzeri).